Consider the following 556-residue polypeptide: MDIRRIVLYMALALIGLSLWNAWQIDYPAKQPVEEKTASQLTSDGHLLPQIIPSNAEQPITLKAEEKASSSKQLIQVKTDVLDVDIDLKNGDIVKGLLLDYPLSVEDKNKPFPLLQNQASQRYVANSSLFILDGQTPQSLDFDFTSEKEYYELKSDQNQLIVTLNGKSEDGLDVKKEFVFTKGSYLIEVNYKIANTGNSLWKGYFNTQLLRSSPKEDKSSIFHIGSYTGASFSNPGKNRYQKVSFSDMSKSNLDVDAKGGWIAMQQHYFLSAWVPNADSENKFYTLATDKDYTIGAVSQPITVKPKEDKIVGSKLYIGPEITSVLKGISPSLDLTVDYGILWFLSSLLFSLMKAIYTVVGNWGWSIVLVTVLIKLAFYRLSATSYKSMASMRKLQPKLQALRERYGDDKAKISQATMELYKQEKVNPLGGCLPILIQIPVFIALYWVLLESVELRQAPFIFWINDLASADPYHVLPLIMGATMLIQQKLNPAPADPMQAKVMMFLPILFTGLFWNFPSGLVLYWIVNNTLSILQQWYITRKYSDEKPAKKVVATAK.

A run of 5 helical transmembrane segments spans residues 6 to 26, 332 to 352, 358 to 378, 428 to 448, and 501 to 521; these read IVLY…WQID, LDLT…FSLM, VVGN…LAFY, LGGC…YWVL, and VMMF…SGLV.

It belongs to the OXA1/ALB3/YidC family. Type 1 subfamily. In terms of assembly, interacts with the Sec translocase complex via SecD. Specifically interacts with transmembrane segments of nascent integral membrane proteins during membrane integration.

Its subcellular location is the cell inner membrane. Required for the insertion and/or proper folding and/or complex formation of integral membrane proteins into the membrane. Involved in integration of membrane proteins that insert both dependently and independently of the Sec translocase complex, as well as at least some lipoproteins. Aids folding of multispanning membrane proteins. The polypeptide is Membrane protein insertase YidC (Legionella pneumophila (strain Paris)).